Reading from the N-terminus, the 306-residue chain is C-type lectin domain family 10 member A (306 aa).

Residues 1 to 37 lie on the Cytoplasmic side of the membrane; it reads MTMAYENFQNLGSEEKNQEAGKAPPQSFLCNILSWTH. A helical; Signal-anchor for type II membrane protein membrane pass occupies residues 38-58; the sequence is LLLFSLGLSLLLLVVISVIGS. The Extracellular portion of the chain corresponds to 59 to 306; the sequence is QNSQLRRDLE…VCEMKLAKDS (248 aa). Residues Asn-76 and Asn-168 are each glycosylated (N-linked (GlcNAc...) asparagine). Residues 174-300 form the C-type lectin domain; the sequence is CCPLHWMEHE…QRPYRWVCEM (127 aa). 3 cysteine pairs are disulfide-bonded: Cys-175-Cys-186, Cys-203-Cys-298, and Cys-276-Cys-290.

In terms of assembly, homooligomer.

It localises to the membrane. Functionally, recognizes terminal galactose and N-acetylgalactosamine units. This is C-type lectin domain family 10 member A (Clec10a) from Rattus norvegicus (Rat).